A 445-amino-acid chain; its full sequence is Histamine H3 receptor (445 aa).

The Extracellular segment spans residues 1–39 (MERAPPDGLMNASGTLAGEAAAAGGARGFSAAWTAVLAA). N-linked (GlcNAc...) asparagine glycosylation is present at N11. The chain crosses the membrane as a helical span at residues 40–60 (LMALLIVATVLGNALVMLAFV). The Cytoplasmic portion of the chain corresponds to 61 to 70 (ADSSLRTQNN). A helical transmembrane segment spans residues 71–91 (FFLLNLAISDFLVGAFCIPLY). Residues 92-108 (VPYVLTGRWTFGRGLCK) are Extracellular-facing. C107 and C188 form a disulfide bridge. A helical transmembrane segment spans residues 109-129 (LWLVVDYLLCASSVFNIVLIS). Residues 130 to 156 (YDRFLSVTRAVSYRAQQGDTRRAVRKM) are Cytoplasmic-facing. A helical membrane pass occupies residues 157–177 (ALVWVLAFLLYGPAILSWEYL). The Extracellular portion of the chain corresponds to 178–196 (SGGSSIPEGHCYAEFFYNW). The chain crosses the membrane as a helical span at residues 197–217 (YFLITASTLEFFTPFLSVTFF). Topologically, residues 218–359 (NLSIYLNIQR…LSRDKKVAKS (142 aa)) are cytoplasmic. Disordered stretches follow at residues 234-259 (DGGR…PSCW) and 286-336 (AGEA…LEKR). Over residues 241 to 256 (PEPPPDAQPSPPPAPP) the composition is skewed to pro residues. Residues 290 to 299 (ALGGGSGGGA) show a composition bias toward gly residues. A compositionally biased stretch (low complexity) spans 300–312 (AASPTSSSGSSSR). A helical transmembrane segment spans residues 360–380 (LAIIVSIFGLCWAPYTLLMII). The Extracellular portion of the chain corresponds to 381-396 (RAACHGRCIPDYWYET). The helical transmembrane segment at 397 to 417 (SFWLLWANSAVNPVLYPLCHY) threads the bilayer. The Cytoplasmic segment spans residues 418 to 445 (SFRRAFTKLLCPQKLKVQPHGSLEQCWK). S439 carries the phosphoserine modification.

This sequence belongs to the G-protein coupled receptor 1 family. Expressed abundantly in brain, most notably throughout the thalamus, the ventromedial hypothalamus and the caudate nucleus. Isoform 1 is largely predominant in all tissues.

It is found in the cell membrane. Its function is as follows. The H3 subclass of histamine receptors could mediate the histamine signals in CNS and peripheral nervous system. Signals through the inhibition of adenylate cyclase and displays high constitutive activity (spontaneous activity in the absence of agonist). The chain is Histamine H3 receptor (Hrh3) from Rattus norvegicus (Rat).